Reading from the N-terminus, the 233-residue chain is Biosynthetic peptidoglycan transglycosylase (233 aa).

The chain crosses the membrane as a helical span at residues 8 to 28; sequence LIALPVGIFIFFNAYVYGNII.

It belongs to the glycosyltransferase 51 family.

The protein resides in the cell inner membrane. The enzyme catalyses [GlcNAc-(1-&gt;4)-Mur2Ac(oyl-L-Ala-gamma-D-Glu-L-Lys-D-Ala-D-Ala)](n)-di-trans,octa-cis-undecaprenyl diphosphate + beta-D-GlcNAc-(1-&gt;4)-Mur2Ac(oyl-L-Ala-gamma-D-Glu-L-Lys-D-Ala-D-Ala)-di-trans,octa-cis-undecaprenyl diphosphate = [GlcNAc-(1-&gt;4)-Mur2Ac(oyl-L-Ala-gamma-D-Glu-L-Lys-D-Ala-D-Ala)](n+1)-di-trans,octa-cis-undecaprenyl diphosphate + di-trans,octa-cis-undecaprenyl diphosphate + H(+). Its pathway is cell wall biogenesis; peptidoglycan biosynthesis. Functionally, peptidoglycan polymerase that catalyzes glycan chain elongation from lipid-linked precursors. The polypeptide is Biosynthetic peptidoglycan transglycosylase (Neisseria meningitidis serogroup C / serotype 2a (strain ATCC 700532 / DSM 15464 / FAM18)).